Here is a 327-residue protein sequence, read N- to C-terminus: Tetraacyldisaccharide 4'-kinase (327 aa).

Position 52–59 (52–59 (TAGGAGKT)) interacts with ATP.

This sequence belongs to the LpxK family.

It carries out the reaction a lipid A disaccharide + ATP = a lipid IVA + ADP + H(+). It functions in the pathway glycolipid biosynthesis; lipid IV(A) biosynthesis; lipid IV(A) from (3R)-3-hydroxytetradecanoyl-[acyl-carrier-protein] and UDP-N-acetyl-alpha-D-glucosamine: step 6/6. Its function is as follows. Transfers the gamma-phosphate of ATP to the 4'-position of a tetraacyldisaccharide 1-phosphate intermediate (termed DS-1-P) to form tetraacyldisaccharide 1,4'-bis-phosphate (lipid IVA). The protein is Tetraacyldisaccharide 4'-kinase of Gluconacetobacter diazotrophicus (strain ATCC 49037 / DSM 5601 / CCUG 37298 / CIP 103539 / LMG 7603 / PAl5).